The sequence spans 116 residues: Nitrogen regulatory PII-like protein (116 aa).

This sequence belongs to the P(II) protein family. Needs to interact with NrgA in order to localize correctly to the membrane.

It is found in the cell membrane. Functionally, required for full induction of the nrgAB operon under conditions of ammonium limitation. The polypeptide is Nitrogen regulatory PII-like protein (nrgB) (Bacillus subtilis (strain 168)).